The sequence spans 196 residues: MASTSLCAANPSASQNLRKVSGFVENKTTQCSFSIESILGLEQKKDGAAVKPHRPWMDGCMHQLGDPHLQIPVVSYENSLFHANSNLMQEEKVLNCEKYFSVTVTERLSFKRELSWYRGRRPRTAFTRNQIEVLENVFKMNSYPGIDIREELARKLDLEEDRIQIWFQNRRAKLKRSHRESQFLMVKNNFTSSLLE.

The segment at residues 119–178 is a DNA-binding region (homeobox); sequence GRRPRTAFTRNQIEVLENVFKMNSYPGIDIREELARKLDLEEDRIQIWFQNRRAKLKRSH.

This sequence belongs to the ANF homeobox family.

Its subcellular location is the nucleus. May be involved in the early patterning of the most anterior region of the main embryonic body axis. This Gallus gallus (Chicken) protein is Homeobox protein ANF-1.